The sequence spans 148 residues: Augurin (148 aa).

The first 31 residues, 1 to 31, serve as a signal peptide directing secretion; sequence MGTSSARPAVLALAGLALLLLLCLGPGDVSG. 2 propeptides span residues 32-68 and 133-148; these read NKLK…LKRA and SREG…YDDY.

It belongs to the augurin family. In terms of tissue distribution, expressed in the brain, with expression in the choroid plexus and the ventricular ependymal cells (at protein level).

The protein localises to the secreted. Its subcellular location is the cytoplasm. It is found in the apical cell membrane. Probable hormone that may attenuate cell proliferation and induce senescence of oligodendrocyte and neural precursor cells in the central nervous system. ECRG4-induced senescence is characterized by G1 arrest, RB1 dephosphorylation and accelerated CCND1 and CCND3 proteasomal degradation. This chain is Augurin, found in Rattus norvegicus (Rat).